The chain runs to 291 residues: Elongation factor Ts (291 aa).

Residues 82–85 (TDFC) are involved in Mg(2+) ion dislocation from EF-Tu.

This sequence belongs to the EF-Ts family.

It localises to the cytoplasm. In terms of biological role, associates with the EF-Tu.GDP complex and induces the exchange of GDP to GTP. It remains bound to the aminoacyl-tRNA.EF-Tu.GTP complex up to the GTP hydrolysis stage on the ribosome. In Methylobacillus flagellatus (strain ATCC 51484 / DSM 6875 / VKM B-1610 / KT), this protein is Elongation factor Ts.